Reading from the N-terminus, the 184-residue chain is UPF0301 protein Sden_2674 (184 aa).

This sequence belongs to the UPF0301 (AlgH) family.

The sequence is that of UPF0301 protein Sden_2674 from Shewanella denitrificans (strain OS217 / ATCC BAA-1090 / DSM 15013).